Reading from the N-terminus, the 197-residue chain is Proteinase inhibitor type-2 (197 aa).

The signal sequence occupies residues 1–24 (MAVHKVSFVAHLLVLGMFLLLVDA). A run of 3 repeats spans residues 24 to 80 (AKAC…DPKN), 81 to 140 (PNVC…DEPK), and 141 to 196 (SCTT…PQSA). Disulfide bonds link cysteine 27–cysteine 115, cysteine 31–cysteine 111, cysteine 39–cysteine 121, cysteine 51–cysteine 88, cysteine 54–cysteine 72, cysteine 55–cysteine 84, cysteine 61–cysteine 97, and cysteine 114–cysteine 132.

It belongs to the protease inhibitor I20 (potato type II proteinase inhibitor) family.

The sequence is that of Proteinase inhibitor type-2 from Nicotiana tabacum (Common tobacco).